The sequence spans 156 residues: Small ribosomal subunit protein uS7 (156 aa).

The protein belongs to the universal ribosomal protein uS7 family. As to quaternary structure, part of the 30S ribosomal subunit. Contacts proteins S9 and S11.

Its function is as follows. One of the primary rRNA binding proteins, it binds directly to 16S rRNA where it nucleates assembly of the head domain of the 30S subunit. Is located at the subunit interface close to the decoding center, probably blocks exit of the E-site tRNA. This is Small ribosomal subunit protein uS7 from Pseudomonas entomophila (strain L48).